Reading from the N-terminus, the 410-residue chain is Dipeptidase 1 (410 aa).

An N-terminal signal peptide occupies residues Met1–Ser16. The Zn(2+) site is built by His36 and Asp38. Cys87 and Cys170 are joined by a disulfide. A glycan (N-linked (GlcNAc...) asparagine) is linked at Asn121. Glu141 serves as a coordination point for Zn(2+). His168 contributes to the substrate binding site. Positions 214 and 235 each coordinate Zn(2+). A disulfide bridge links Cys242 with Cys274. Arg246 is a binding site for substrate. Asn258 is a glycosylation site (N-linked (GlcNAc...) asparagine). Asp304 is a binding site for substrate. Asn332 carries N-linked (GlcNAc...) asparagine glycosylation. Ser384 is lipidated: GPI-anchor amidated serine. Residues Gln385–Leu410 constitute a propeptide, removed in mature form.

Belongs to the metallo-dependent hydrolases superfamily. Peptidase M19 family. As to quaternary structure, homodimer; disulfide-linked. Zn(2+) serves as cofactor. In terms of tissue distribution, expressed in heart, lung, skeletal muscle, kidney, liver, and testis. Not detected in brain and spleen.

The protein resides in the apical cell membrane. Its subcellular location is the cell projection. It is found in the microvillus membrane. It carries out the reaction an L-aminoacyl-L-amino acid + H2O = 2 an L-alpha-amino acid. It catalyses the reaction leukotriene D4 + H2O = leukotriene E4 + glycine. The catalysed reaction is L-cystine-bis-glycine + 2 H2O = L-cystine + 2 glycine. The enzyme catalyses a beta-lactam + H2O = a substituted beta-amino acid. It carries out the reaction glycyldehydrophenylalanine + H2O = 2,3-didehydrophenylalanine + glycine. Its activity is regulated as follows. Inhibited by L-penicillamine. Inhibited by cilastatin. Functionally, hydrolyzes a wide range of dipeptides including the conversion of leukotriene D4 to leukotriene E4. Hydrolyzes cystinyl-bis-glycine (cys-bis-gly) formed during glutathione degradation. Also possesses beta lactamase activity and hydrolytically inactivates beta-lactam antibiotics. In terms of biological role, independently of its dipeptidase activity, acts as an adhesion receptor for neutrophil recruitment from bloodstream into inflamed lungs and liver. This is Dipeptidase 1 (Dpep1) from Mus musculus (Mouse).